A 117-amino-acid polypeptide reads, in one-letter code: Large ribosomal subunit protein bL20c (117 aa).

Belongs to the bacterial ribosomal protein bL20 family.

Its subcellular location is the plastid. It localises to the chloroplast. Binds directly to 23S ribosomal RNA and is necessary for the in vitro assembly process of the 50S ribosomal subunit. It is not involved in the protein synthesizing functions of that subunit. The polypeptide is Large ribosomal subunit protein bL20c (Nasturtium officinale (Watercress)).